Here is a 439-residue protein sequence, read N- to C-terminus: Ornithine aminotransferase, mitochondrial (439 aa).

Residues 1–25 (MLSKLASLQTIAALRRGVHTSVASA) constitute a mitochondrion transit peptide. 2 positions are modified to N6-acetyllysine: lysine 49 and lysine 66. Position 102 is an N6-succinyllysine (lysine 102). Lysine 107 bears the N6-acetyllysine; alternate mark. The residue at position 107 (lysine 107) is an N6-succinyllysine; alternate. Lysine 292 is subject to N6-(pyridoxal phosphate)lysine. Lysine 362 is subject to N6-acetyllysine; alternate. Lysine 362 bears the N6-succinyllysine; alternate mark. N6-acetyllysine is present on residues lysine 386 and lysine 392. The residue at position 405 (lysine 405) is an N6-acetyllysine; alternate. An N6-succinyllysine; alternate modification is found at lysine 405. Lysine 421 carries the N6-acetyllysine modification.

The protein belongs to the class-III pyridoxal-phosphate-dependent aminotransferase family. In terms of assembly, homohexamer. Pyridoxal 5'-phosphate serves as cofactor.

Its subcellular location is the mitochondrion matrix. It carries out the reaction L-ornithine + 2-oxoglutarate = L-glutamate 5-semialdehyde + L-glutamate. Its pathway is amino-acid biosynthesis; L-proline biosynthesis; L-glutamate 5-semialdehyde from L-ornithine: step 1/1. Functionally, catalyzes the reversible interconversion of L-ornithine and 2-oxoglutarate to L-glutamate semialdehyde and L-glutamate. The polypeptide is Ornithine aminotransferase, mitochondrial (Oat) (Mus musculus (Mouse)).